Reading from the N-terminus, the 500-residue chain is Probable cytosol aminopeptidase (500 aa).

Mn(2+) contacts are provided by lysine 264 and aspartate 269. The active site involves lysine 276. Mn(2+)-binding residues include aspartate 287, aspartate 346, and glutamate 348. Arginine 350 is an active-site residue.

It belongs to the peptidase M17 family. Requires Mn(2+) as cofactor.

The protein resides in the cytoplasm. It carries out the reaction Release of an N-terminal amino acid, Xaa-|-Yaa-, in which Xaa is preferably Leu, but may be other amino acids including Pro although not Arg or Lys, and Yaa may be Pro. Amino acid amides and methyl esters are also readily hydrolyzed, but rates on arylamides are exceedingly low.. The catalysed reaction is Release of an N-terminal amino acid, preferentially leucine, but not glutamic or aspartic acids.. In terms of biological role, presumably involved in the processing and regular turnover of intracellular proteins. Catalyzes the removal of unsubstituted N-terminal amino acids from various peptides. In Rhodopseudomonas palustris (strain ATCC BAA-98 / CGA009), this protein is Probable cytosol aminopeptidase.